A 211-amino-acid polypeptide reads, in one-letter code: WAP four-disulfide core domain protein 1 (211 aa).

The signal sequence occupies residues 1–23 (MGNCGRKVLRALSFLLLLGSSSA). In terms of domain architecture, WAP spans 50–99 (RQPHADRCPPPPRTLPPGACQATRCQADSECPRHRRCCYNGCAYACLEAV). Cystine bridges form between Cys-57–Cys-87, Cys-69–Cys-91, Cys-74–Cys-86, and Cys-80–Cys-95. Residues 182-198 (VLRQRLHKEYPEGDSKN) are compositionally biased toward basic and acidic residues. The tract at residues 182-211 (VLRQRLHKEYPEGDSKNVAEPGKGQQRHFP) is disordered.

The protein localises to the secreted. In terms of biological role, has growth inhibitory activity. This chain is WAP four-disulfide core domain protein 1 (Wfdc1), found in Mus musculus (Mouse).